The chain runs to 720 residues: uncharacterized protein (720 aa).

Residue Gly-2 is the site of N-myristoyl glycine; by host attachment.

This is an uncharacterized protein from Cryphonectria parasitica mycoreovirus 1 (strain 9B21) (CpMYRV-1).